A 383-amino-acid polypeptide reads, in one-letter code: Acetylornithine deacetylase (383 aa).

Histidine 80 contacts Zn(2+). Aspartate 82 is an active-site residue. Aspartate 112 serves as a coordination point for Zn(2+). The active site involves glutamate 144. The Zn(2+) site is built by glutamate 145, glutamate 169, and histidine 355.

It belongs to the peptidase M20A family. ArgE subfamily. In terms of assembly, homodimer. Requires Zn(2+) as cofactor. The cofactor is Co(2+). Glutathione is required as a cofactor.

The protein localises to the cytoplasm. It catalyses the reaction N(2)-acetyl-L-ornithine + H2O = L-ornithine + acetate. The protein operates within amino-acid biosynthesis; L-arginine biosynthesis; L-ornithine from N(2)-acetyl-L-ornithine (linear): step 1/1. In terms of biological role, catalyzes the hydrolysis of the amide bond of N(2)-acetylated L-amino acids. Cleaves the acetyl group from N-acetyl-L-ornithine to form L-ornithine, an intermediate in L-arginine biosynthesis pathway, and a branchpoint in the synthesis of polyamines. This chain is Acetylornithine deacetylase, found in Pectobacterium carotovorum subsp. carotovorum (strain PC1).